A 234-amino-acid chain; its full sequence is Urease accessory protein UreF (234 aa).

The protein belongs to the UreF family. UreD, UreF and UreG form a complex that acts as a GTP-hydrolysis-dependent molecular chaperone, activating the urease apoprotein by helping to assemble the nickel containing metallocenter of UreC. The UreE protein probably delivers the nickel.

It localises to the cytoplasm. In terms of biological role, required for maturation of urease via the functional incorporation of the urease nickel metallocenter. The sequence is that of Urease accessory protein UreF from Kocuria rhizophila (strain ATCC 9341 / DSM 348 / NBRC 103217 / DC2201).